The chain runs to 87 residues: Dynein light chain 1, cytoplasmic (87 aa).

Belongs to the dynein light chain family. As to quaternary structure, homodimer. Cytoplasmic dynein consists of two catalytic heavy chains (HCs) and a number of non-catalytic subunits which present intermediate chains (ICs), light intermediate chains (LICs) and light chains (LCs). Component of the nuclear pore complex (NPC). NPC constitutes the exclusive means of nucleocytoplasmic transport. NPCs allow the passive diffusion of ions and small molecules and the active, nuclear transport receptor-mediated bidirectional transport of macromolecules such as proteins, RNAs, ribonucleoparticles (RNPs), and ribosomal subunits across the nuclear envelope. Due to its 8-fold rotational symmetry, all subunits are present with 8 copies or multiples thereof.

Its subcellular location is the cytoplasm. The protein resides in the cytoskeleton. It is found in the nucleus. The protein localises to the nuclear pore complex. Acts as one of several non-catalytic accessory components of the cytoplasmic dynein complex that are thought to be involved in linking dynein to cargos and to adapter proteins that regulate dynein function. Cytoplasmic dynein 1 acts as a motor for the intracellular retrograde motility of vesicles and organelles along microtubules. May play a role in changing or maintaining the spatial distribution of cytoskeletal structures. Also a component of the nuclear pore complex. In Kluyveromyces lactis (strain ATCC 8585 / CBS 2359 / DSM 70799 / NBRC 1267 / NRRL Y-1140 / WM37) (Yeast), this protein is Dynein light chain 1, cytoplasmic (DYN2).